Here is a 227-residue protein sequence, read N- to C-terminus: 2-C-methyl-D-erythritol 4-phosphate cytidylyltransferase (227 aa).

Belongs to the IspD/TarI cytidylyltransferase family. IspD subfamily.

The enzyme catalyses 2-C-methyl-D-erythritol 4-phosphate + CTP + H(+) = 4-CDP-2-C-methyl-D-erythritol + diphosphate. The protein operates within isoprenoid biosynthesis; isopentenyl diphosphate biosynthesis via DXP pathway; isopentenyl diphosphate from 1-deoxy-D-xylulose 5-phosphate: step 2/6. Catalyzes the formation of 4-diphosphocytidyl-2-C-methyl-D-erythritol from CTP and 2-C-methyl-D-erythritol 4-phosphate (MEP). The chain is 2-C-methyl-D-erythritol 4-phosphate cytidylyltransferase from Dehalococcoides mccartyi (strain CBDB1).